The primary structure comprises 156 residues: Riboflavin synthase (156 aa).

The protein belongs to the DMRL synthase family.

It carries out the reaction 2 6,7-dimethyl-8-(1-D-ribityl)lumazine + H(+) = 5-amino-6-(D-ribitylamino)uracil + riboflavin. The protein operates within cofactor biosynthesis; riboflavin biosynthesis; riboflavin from 2-hydroxy-3-oxobutyl phosphate and 5-amino-6-(D-ribitylamino)uracil: step 2/2. The chain is Riboflavin synthase (ribC) from Methanocaldococcus jannaschii (strain ATCC 43067 / DSM 2661 / JAL-1 / JCM 10045 / NBRC 100440) (Methanococcus jannaschii).